Here is a 157-residue protein sequence, read N- to C-terminus: uncharacterized protein (157 aa).

The region spanning 9–146 is the N-acetyltransferase domain; that stretch reads LLINYKTLDE…GDFYVWHPET (138 aa).

This is an uncharacterized protein from Bacillus anthracis (strain CDC 684 / NRRL 3495).